Here is a 385-residue protein sequence, read N- to C-terminus: Polyketide synthase 4 (385 aa).

Cys157 is a catalytic residue.

It belongs to the thiolase-like superfamily. Chalcone/stilbene synthases family. As to expression, expressed in glandular trichomes.

It localises to the cytoplasm. Functionally, polyketide synthase responsible for the biosynthesis of secondary metabolites. This is Polyketide synthase 4 (PKSG4) from Cannabis sativa (Hemp).